Consider the following 202-residue polypeptide: Thymidylate kinase (202 aa).

7 to 14 (GIDGSGKT) is a binding site for ATP.

It belongs to the thymidylate kinase family.

The catalysed reaction is dTMP + ATP = dTDP + ADP. Functionally, phosphorylation of dTMP to form dTDP in both de novo and salvage pathways of dTTP synthesis. The sequence is that of Thymidylate kinase from Ehrlichia chaffeensis (strain ATCC CRL-10679 / Arkansas).